A 482-amino-acid chain; its full sequence is MDLFRVWSGMDFLAWRGMAYTLLLLNFVFACQLLLLQPLVSALDGQSVDAAELFERASQSIKVKRYSDALDDLNAAIEADPALSEAYFKRASVLRHFCRYEDSENSYQKYLEFKSGDSNAEKELSQLHQAKSALETASTLYESKDIAKALEFVDKVVLVFSPACSKAKLLKVKLLMVSKDYSGAISETGYILKEDENNLEALLLRGRAYYYLADHDIAQRHYQKGLRLDPEHSELKKAYFGLKKLLKKTKSAEDNANKGKLRVSAEEYKEAIALDPEHTANNVHLYLGLCKVSVRLGRGKDGLNSCNEALNIDAELIEALHQRGEAKLLLEDWEGAVEDLKQAAQNSQDMEIHESLGKAEKALKMSKRKDWYKILGISRTASISEIKKAYKKLALQWHPDKNVGNREEAENKFREIAAAYEILGDDDKRARFDRGEDLEDMGGGGGGGYNPFHGGGGGGQQYTFHFEGGFPGGGGGFGGFGF.

The N-terminal stretch at 1 to 42 (MDLFRVWSGMDFLAWRGMAYTLLLLNFVFACQLLLLQPLVSA) is a signal peptide. 8 TPR repeats span residues 50–83 (AAEL…DPAL), 85–117 (EAYF…KSGD), 130–164 (AKSA…SPAC), 166–198 (KAKL…DENN), 199–232 (LEAL…DPEH), 245–278 (LLKK…DPEH), 283–316 (VHLY…DAEL), and 318–350 (EALH…SQDM). The J domain maps to 370 to 436 (DWYKILGISR…DKRARFDRGE (67 aa)).

As to quaternary structure, interacts with the helicase domain of the tobamovirus (TMV) and the tobacco etch virus (TEV) replicases. In terms of tissue distribution, expressed in flower buds and flowers.

It is found in the endoplasmic reticulum lumen. Its function is as follows. Plays an important positive role in viral symptom development and is required for viral multiplication and pathogenesis. In Arabidopsis thaliana (Mouse-ear cress), this protein is DnaJ protein P58IPK homolog (P58IPK).